The following is a 568-amino-acid chain: MTVSTFNRTWAKVIVNALLRYGVKHFCIAPGSRSTPLTLEALQLQQNQQAQCHSHFDERGLGFFALGIAKVTNDPVAIIVTSGTAVANLYPAIIEASLTHHKLIVLSADRPPELIGCGANQAIPQQGIFADYPIAGVNLPKPAEHYNAGWLVATIEQACITQSQQGGVVHINAPFAEPLYEADENAINTHPWLKPIQSWLINPQTKWINSQTIQSEVSMHENWDYWRTKRGVIVVGKLPVEQGIGIKAWAETLGWCLITDVQSCVDANLPYADIWLSNNTVHQRLLQADIVIQFGGQIVSKRVNKFLEAFKGEFWQVDEYSDYLNPFAHHQTRFVAKAHHFLRVHPPLRQKPWLLEPLALSQFCAGFIEQQVGGSLNEASLAHHIEEVLATSGNLFIGNSLFVRLVDALCKLPEGYPVYTNRGASGIDGLIATMAGVAKGSGQPTVGIIGDISALHDLNSVSLLNKISHPCILFVINNSGGAIFDMLPVEAQAKEQFYRLSHNYEFAPIATMFGIEYIRPFTWADLKAKLKLAYGRKGVTIVEIKVNDQDGSNLYKSLVKQISQAEIA.

It belongs to the TPP enzyme family. MenD subfamily. In terms of assembly, homodimer. Mg(2+) serves as cofactor. It depends on Mn(2+) as a cofactor. Thiamine diphosphate is required as a cofactor.

The enzyme catalyses isochorismate + 2-oxoglutarate + H(+) = 5-enolpyruvoyl-6-hydroxy-2-succinyl-cyclohex-3-ene-1-carboxylate + CO2. The protein operates within quinol/quinone metabolism; 1,4-dihydroxy-2-naphthoate biosynthesis; 1,4-dihydroxy-2-naphthoate from chorismate: step 2/7. It functions in the pathway quinol/quinone metabolism; menaquinone biosynthesis. In terms of biological role, catalyzes the thiamine diphosphate-dependent decarboxylation of 2-oxoglutarate and the subsequent addition of the resulting succinic semialdehyde-thiamine pyrophosphate anion to isochorismate to yield 2-succinyl-5-enolpyruvyl-6-hydroxy-3-cyclohexene-1-carboxylate (SEPHCHC). The chain is 2-succinyl-5-enolpyruvyl-6-hydroxy-3-cyclohexene-1-carboxylate synthase from Actinobacillus pleuropneumoniae serotype 3 (strain JL03).